Here is a 474-residue protein sequence, read N- to C-terminus: uncharacterized protein (474 aa).

The first 23 residues, Met-1 to Gly-23, serve as a signal peptide directing secretion. Cys-24 carries N-palmitoyl cysteine lipidation. Cys-24 is lipidated: S-diacylglycerol cysteine.

The protein belongs to the MG067/MG068/MG395 family.

The protein localises to the cell membrane. This is an uncharacterized protein from Mycoplasma genitalium (strain ATCC 33530 / DSM 19775 / NCTC 10195 / G37) (Mycoplasmoides genitalium).